A 211-amino-acid chain; its full sequence is Protein-L-isoaspartate O-methyltransferase (211 aa).

Ser-62 is an active-site residue.

It belongs to the methyltransferase superfamily. L-isoaspartyl/D-aspartyl protein methyltransferase family.

The protein localises to the cytoplasm. It carries out the reaction [protein]-L-isoaspartate + S-adenosyl-L-methionine = [protein]-L-isoaspartate alpha-methyl ester + S-adenosyl-L-homocysteine. Catalyzes the methyl esterification of L-isoaspartyl residues in peptides and proteins that result from spontaneous decomposition of normal L-aspartyl and L-asparaginyl residues. It plays a role in the repair and/or degradation of damaged proteins. The sequence is that of Protein-L-isoaspartate O-methyltransferase from Shewanella piezotolerans (strain WP3 / JCM 13877).